We begin with the raw amino-acid sequence, 205 residues long: Molybdopterin synthase catalytic subunit (205 aa).

The tract at residues 1 to 36 is disordered; sequence MQHPTLQPEVDPNPVVSSSSSSSSSNPLPAHLNPAN. Substrate contacts are provided by residues 146 to 147, Lys162, and 169 to 171; these read HR and KRE. Residues 179 to 205 form a disordered region; it reads GEGEGEWRANRDTDSQGNCRGDKVAEG. The segment covering 183–205 has biased composition (basic and acidic residues); the sequence is GEWRANRDTDSQGNCRGDKVAEG.

Belongs to the MoaE family. MOCS2B subfamily. As to quaternary structure, heterotetramer; composed of 2 small (MOCS2A) and 2 large (MOCS2B) subunits.

It localises to the cytoplasm. It carries out the reaction 2 [molybdopterin-synthase sulfur-carrier protein]-C-terminal-Gly-aminoethanethioate + cyclic pyranopterin phosphate + H2O = molybdopterin + 2 [molybdopterin-synthase sulfur-carrier protein]-C-terminal Gly-Gly + 2 H(+). The protein operates within cofactor biosynthesis; molybdopterin biosynthesis. In terms of biological role, catalytic subunit of the molybdopterin synthase complex, a complex that catalyzes the conversion of precursor Z into molybdopterin. Acts by mediating the incorporation of 2 sulfur atoms from thiocarboxylated MOCS2A into precursor Z to generate a dithiolene group. This Ajellomyces capsulatus (strain NAm1 / WU24) (Darling's disease fungus) protein is Molybdopterin synthase catalytic subunit.